Consider the following 121-residue polypeptide: UPF0738 protein BLi01253/BL05110 (121 aa).

It belongs to the UPF0738 family.

The chain is UPF0738 protein BLi01253/BL05110 from Bacillus licheniformis (strain ATCC 14580 / DSM 13 / JCM 2505 / CCUG 7422 / NBRC 12200 / NCIMB 9375 / NCTC 10341 / NRRL NRS-1264 / Gibson 46).